Here is a 374-residue protein sequence, read N- to C-terminus: Methylthioribose-1-phosphate isomerase (374 aa).

Catalysis depends on Asp-256, which acts as the Proton donor.

This sequence belongs to the eIF-2B alpha/beta/delta subunits family. MtnA subfamily.

Its subcellular location is the cytoplasm. It localises to the nucleus. The enzyme catalyses 5-(methylsulfanyl)-alpha-D-ribose 1-phosphate = 5-(methylsulfanyl)-D-ribulose 1-phosphate. Its pathway is amino-acid biosynthesis; L-methionine biosynthesis via salvage pathway; L-methionine from S-methyl-5-thio-alpha-D-ribose 1-phosphate: step 1/6. In terms of biological role, catalyzes the interconversion of methylthioribose-1-phosphate (MTR-1-P) into methylthioribulose-1-phosphate (MTRu-1-P). The chain is Methylthioribose-1-phosphate isomerase from Leishmania braziliensis.